Here is a 2968-residue protein sequence, read N- to C-terminus: Trinucleotide repeat-containing gene 18 protein (2968 aa).

Disordered regions lie at residues 1-24 and 139-261; these read MDGR…SGLA and GSPL…LAER. A compositionally biased stretch (low complexity) spans 139 to 150; it reads GSPLLSQLGQPS. Basic and acidic residues-rich tracts occupy residues 221 to 233 and 243 to 260; these read GKKD…EEAS and QEAR…RLAE. Ser263 is modified (phosphoserine). Basic and acidic residues predominate over residues 304-322; that stretch reads GAKEAARQDEGARLLRRTE. Disordered regions lie at residues 304–356 and 381–488; these read GAKE…PAGV and FDER…PAAQ. A compositionally biased stretch (pro residues) spans 327–351; that stretch reads GPRPCPSPLPPPPAPPKGPPAPPAA. Composition is skewed to basic and acidic residues over residues 395–405, 419–431, and 464–479; these read RDARAREREAG, PLDR…EKNS, and ELLK…ERAP. Phosphoserine is present on Ser611. Disordered regions lie at residues 612 to 679, 941 to 1002, 1019 to 1055, 1106 to 1190, 1212 to 1236, 1279 to 1306, 1497 to 1566, and 1687 to 1855; these read PFGG…EVRH, EHRA…SPVA, PAYA…PENV, DADG…MATP, SCAE…PGRT, LAQV…GQCP, KQRE…SDDY, and SLKS…RERA. Lys620 participates in a covalent cross-link: Glycyl lysine isopeptide (Lys-Gly) (interchain with G-Cter in SUMO2). Composition is skewed to basic and acidic residues over residues 651 to 660 and 941 to 955; these read LKRDPERPES and EHRA…KRGL. A coiled-coil region spans residues 916-949; that stretch reads LQQQAAQALELQRSAQLVQERLKAQEHRAEMEEK. 2 stretches are compositionally biased toward low complexity: residues 966–983 and 1019–1031; these read AGPG…AGPA and PAYA…SSHP. Pro residues predominate over residues 1032–1043; that stretch reads TSPPPASPPPTP. Over residues 1046–1055 the composition is skewed to basic and acidic residues; the sequence is TRKEEAPENV. A phosphoserine mark is found at Ser1127 and Ser1136. The segment covering 1142–1162 has biased composition (basic and acidic residues); the sequence is EPLREGPEEEPLAEREVKAEV. Residues 1171 to 1181 show a composition bias toward pro residues; that stretch reads ELPPLESPLPL. Positions 1481–1516 form a coiled coil; it reads LDFRMRLAEVQRQYKEKQRELVKLQRRRDSEDRREE. Residues 1497-1519 show a composition bias toward basic and acidic residues; sequence KQRELVKLQRRRDSEDRREEPHR. Residues 1520–1534 are compositionally biased toward basic residues; it reads SLARRGPGRPRKRTH. At Ser1540 the chain carries Phosphoserine. Over residues 1549 to 1563 the composition is skewed to low complexity; sequence GHSSGKLSSKSLLTS. Residues 1816-1842 are compositionally biased toward acidic residues; it reads SSEESFDQDESSEEEDEEEELEEEDEA. Residues Ser1857 and Ser1863 each carry the phosphoserine modification. Disordered regions lie at residues 1912–2148 and 2295–2771; these read YTDS…LTPA and LLVP…RLPS. Basic and acidic residues-rich tracts occupy residues 1957 to 1968 and 1993 to 2004; these read SPDKAKLAVEKG and LWTRRRSERIFL. Residues 2007–2024 are compositionally biased toward low complexity; sequence ASAAAPAPVSTAPATKTS. Residues 2034–2046 are compositionally biased toward basic and acidic residues; the sequence is PRKDAGRAKDRKD. Low complexity predominate over residues 2069–2085; the sequence is ALPSEARAPHASSLTAA. Residues 2093-2103 show a composition bias toward basic and acidic residues; that stretch reads KGKEVKKENRG. Position 2146 is a phosphothreonine (Thr2146). Over residues 2307-2316 the composition is skewed to basic and acidic residues; sequence TSKDTGEGKD. A compositionally biased stretch (basic residues) spans 2329 to 2338; it reads ARGRGRKPSA. The span at 2365–2374 shows a compositional bias: low complexity; the sequence is EPSSTPGSKK. Residues 2375 to 2384 show a composition bias toward basic and acidic residues; it reads SPPEPVDKRA. Over residues 2390 to 2401 the composition is skewed to pro residues; sequence RPAPPQPSPAPP. The span at 2411 to 2433 shows a compositional bias: low complexity; that stretch reads PFAELPAPATSLAPAPLITMPAT. Basic and acidic residues-rich tracts occupy residues 2441-2468 and 2477-2487; these read RAAE…DHEG and AKEALLLREDP. Low complexity-rich tracts occupy residues 2559-2580 and 2603-2671; these read SSSS…SGSE and SAAS…SSSS. Residues 2673-2685 are compositionally biased toward acidic residues; the sequence is TDEDSSCSSDDEA. Over residues 2723-2736 the composition is skewed to pro residues; sequence APQPQAPPPQPTQP. Phosphoserine is present on Ser2771. The region spanning 2817-2962 is the BAH domain; it reads EMIRIGDCAV…PTTGMIFSTD (146 aa).

In Homo sapiens (Human), this protein is Trinucleotide repeat-containing gene 18 protein.